A 464-amino-acid chain; its full sequence is Uronate isomerase (464 aa).

The protein belongs to the metallo-dependent hydrolases superfamily. Uronate isomerase family.

It catalyses the reaction D-glucuronate = D-fructuronate. The catalysed reaction is aldehydo-D-galacturonate = keto-D-tagaturonate. Its pathway is carbohydrate metabolism; pentose and glucuronate interconversion. This chain is Uronate isomerase, found in Caldicellulosiruptor bescii (strain ATCC BAA-1888 / DSM 6725 / KCTC 15123 / Z-1320) (Anaerocellum thermophilum).